We begin with the raw amino-acid sequence, 312 residues long: Malate dehydrogenase (312 aa).

NAD(+) is bound by residues 12-17 and aspartate 36; that span reads GAGFTG. Residues arginine 87 and arginine 93 each coordinate substrate. NAD(+)-binding positions include asparagine 100 and 123–125; that span reads LTN. Residue asparagine 125 coordinates substrate. Serine 149 carries the phosphoserine modification. Substrate is bound at residue arginine 156. The active-site Proton acceptor is histidine 180.

Belongs to the LDH/MDH superfamily. MDH type 3 family.

The enzyme catalyses (S)-malate + NAD(+) = oxaloacetate + NADH + H(+). Functionally, catalyzes the reversible oxidation of malate to oxaloacetate. This is Malate dehydrogenase from Bacillus mycoides (strain KBAB4) (Bacillus weihenstephanensis).